A 160-amino-acid chain; its full sequence is MSEISTALSEDCPCQSGHHYADCCGKFHLRQAFPETAEQLMRSRYTAYVLKNIPYIVVTTVPSQQTLLEPRLLQEWADNTTWLGLEILKTESLTKTQSAVEFKAIFQGEECEQAHQERSIFVKIEDRWYFVDPTVSLPTMKQPCVCGSGKKFKHCCGGFL.

It belongs to the UPF0225 family.

The protein is UPF0225 protein CGSHiEE_01665 of Haemophilus influenzae (strain PittEE).